The chain runs to 101 residues: MDKSKRLFLKSKRSFRRRLPPIQSGDRIDYRNISLISRFISQQGKILSRRVNRLTLKQQRLITIAIKQARILSLLPFRPKAQRFKRSQSTARTVGLRTRNK.

The protein belongs to the bacterial ribosomal protein bS18 family. In terms of assembly, part of the 30S ribosomal subunit.

The protein localises to the plastid. It is found in the chloroplast. This is Small ribosomal subunit protein bS18c from Oenothera biennis (German evening primrose).